Consider the following 239-residue polypeptide: Probable transcriptional regulator ycf27 (239 aa).

The Response regulatory domain maps to 7–120; sequence KILVVDDEIS…ELEARIRSLL (114 aa). D56 carries the 4-aspartylphosphate modification. The segment at residues 76-94 is a DNA-binding region (H-T-H motif); the sequence is DIPIIMLTALGDVADRITG. The ompR/PhoB-type DNA-binding region spans 135–236; sequence GENLQIGFLK…ARGIGYLFQN (102 aa).

The protein resides in the plastid. It localises to the cyanelle. Probable promoter-specific protein mediating the interaction between DNA and RNA polymerase. The protein is Probable transcriptional regulator ycf27 (ycf27) of Cyanophora paradoxa.